The following is a 273-amino-acid chain: Proteasome subunit beta (273 aa).

Residues 1 to 19 (MQESTANKVAANATSSFTE) show a composition bias toward polar residues. Residues 1–23 (MQESTANKVAANATSSFTEHLQR) are disordered. Positions 1-50 (MQESTANKVAANATSSFTEHLQRDRPELLPFNRSGQGSATAAAPLQVPHA) are cleaved as a propeptide — removed in mature form; by autocatalysis. The active-site Nucleophile is threonine 51.

It belongs to the peptidase T1B family. As to quaternary structure, the 20S proteasome core is composed of 14 alpha and 14 beta subunits that assemble into four stacked heptameric rings, resulting in a barrel-shaped structure. The two inner rings, each composed of seven catalytic beta subunits, are sandwiched by two outer rings, each composed of seven alpha subunits. The catalytic chamber with the active sites is on the inside of the barrel. Has a gated structure, the ends of the cylinder being occluded by the N-termini of the alpha-subunits. Is capped by the proteasome-associated ATPase, ARC.

Its subcellular location is the cytoplasm. It catalyses the reaction Cleavage of peptide bonds with very broad specificity.. It participates in protein degradation; proteasomal Pup-dependent pathway. Its activity is regulated as follows. The formation of the proteasomal ATPase ARC-20S proteasome complex, likely via the docking of the C-termini of ARC into the intersubunit pockets in the alpha-rings, may trigger opening of the gate for substrate entry. Interconversion between the open-gate and close-gate conformations leads to a dynamic regulation of the 20S proteasome proteolysis activity. In terms of biological role, component of the proteasome core, a large protease complex with broad specificity involved in protein degradation. The polypeptide is Proteasome subunit beta (Pseudarthrobacter chlorophenolicus (strain ATCC 700700 / DSM 12829 / CIP 107037 / JCM 12360 / KCTC 9906 / NCIMB 13794 / A6) (Arthrobacter chlorophenolicus)).